We begin with the raw amino-acid sequence, 143 residues long: Nucleoside diphosphate kinase (143 aa).

One can recognise an NDPK-like domain in the interval 1–132 (MVKPDGVQRG…LWFSPQELCQ (132 aa)). Positions 3, 51, 79, 85, 96, 103, and 106 each coordinate ADP. ATP is bound by residues K3, F51, R79, T85, and R96. N106 provides a ligand contact to ATP. H109 acts as the Pros-phosphohistidine intermediate in catalysis.

It belongs to the NDK family. In terms of assembly, homohexamer. Mg(2+) serves as cofactor.

It catalyses the reaction a 2'-deoxyribonucleoside 5'-diphosphate + ATP = a 2'-deoxyribonucleoside 5'-triphosphate + ADP. It carries out the reaction a ribonucleoside 5'-diphosphate + ATP = a ribonucleoside 5'-triphosphate + ADP. The catalysed reaction is GDP + ATP = GTP + ADP. The protein operates within purine metabolism; purine nucleotide biosynthesis. Major role in the synthesis of nucleoside triphosphates other than ATP. The ATP gamma phosphate is transferred to the NDP beta phosphate via a ping-pong mechanism, using a phosphorylated active-site intermediate. The chain is Nucleoside diphosphate kinase from Schistosoma mansoni (Blood fluke).